Reading from the N-terminus, the 364-residue chain is Alanine racemase (364 aa).

The active-site Proton acceptor; specific for D-alanine is the K35. K35 bears the N6-(pyridoxal phosphate)lysine mark. Residue R131 coordinates substrate. The active-site Proton acceptor; specific for L-alanine is the Y256. Position 304 (M304) interacts with substrate.

Belongs to the alanine racemase family. Pyridoxal 5'-phosphate serves as cofactor.

It catalyses the reaction L-alanine = D-alanine. Its pathway is amino-acid biosynthesis; D-alanine biosynthesis; D-alanine from L-alanine: step 1/1. Functionally, catalyzes the interconversion of L-alanine and D-alanine. May also act on other amino acids. The chain is Alanine racemase (alr) from Halorhodospira halophila (strain DSM 244 / SL1) (Ectothiorhodospira halophila (strain DSM 244 / SL1)).